The following is a 292-amino-acid chain: Probable septum site-determining protein MinC (292 aa).

The interval 112 to 188 (DTAPPNDVAT…PQSSSALVIT (77 aa)) is disordered. Positions 128–137 (EATAEAAAKA) are enriched in low complexity. Over residues 140 to 150 (QDDEAYGEQAD) the composition is skewed to acidic residues. The span at 171–185 (ANRPTATPPQSSSAL) shows a compositional bias: polar residues.

The protein belongs to the MinC family. Interacts with MinD and FtsZ.

Its function is as follows. Cell division inhibitor that blocks the formation of polar Z ring septums. Rapidly oscillates between the poles of the cell to destabilize FtsZ filaments that have formed before they mature into polar Z rings. Prevents FtsZ polymerization. This chain is Probable septum site-determining protein MinC, found in Bordetella bronchiseptica (strain ATCC BAA-588 / NCTC 13252 / RB50) (Alcaligenes bronchisepticus).